The primary structure comprises 473 residues: MATVAEQWVLVEMVQALYEAPAYHLILEGILILWIIRLVFSKTYKLQERSDLTAKEKEELIEEWQPEPLVPPVSRNHPALNYNIVSGPPTHNIVVNGKECVNFASFNFLGLLANPRVKAAAFASLKKYGVGTCGPRGFYGTFDVHLDLEERLAKFMKTEEAIIYSYGFSTIASAIPAYSKRGDIVFVDSAACFAIQKGLQASRSDIKLFKHNDVADLERLLKEQEIEDQKNPRKARVTRRFIVAEGLYMNTGTICPLPELVRLKYKYKARIFLEESLSFGVLGEHGRGVTEHYGISIDDIDLISANMENALASVGGFCCGRSFVVDHQRLSGQGYCFSASLPPLLAAAAIEALNIMEENPGIFAVLKKKCQTIHKSLQGVSGLKVVGESLCPALHLQLEESTGSRERDMKLLQEIVEQCMNKGIALTQARYLDKEEKCLPPPSIRVVVTVEQTDEELQRAAATIREAAQAVLL.

The Lumenal segment spans residues 1–15 (MATVAEQWVLVEMVQ). The interval 1-66 (MATVAEQWVL…KEELIEEWQP (66 aa)) is interaction with SPTLC2. The helical transmembrane segment at 16-36 (ALYEAPAYHLILEGILILWII) threads the bilayer. At 37–473 (RLVFSKTYKL…IREAAQAVLL (437 aa)) the chain is on the cytoplasmic side. Position 164 is a phosphotyrosine; by ABL (Y164).

Belongs to the class-II pyridoxal-phosphate-dependent aminotransferase family. In terms of assembly, component of the serine palmitoyltransferase (SPT) complex, which is also composed of SPTLC2 or SPTLC3 and SPTSSA or SPTSSB. The heterodimer with SPTLC2 or SPTLC3 forms the catalytic core of the enzyme, while SPTSSA or SPTSSB subunits determine substrate specificity. SPT also interacts with ORMDL proteins, especially ORMDL3, which negatively regulate SPT activity in the presence of ceramides. Forms dimers of heterodimers with SPTLC2. Interacts with RTN4 (isoform B). It depends on pyridoxal 5'-phosphate as a cofactor. In terms of processing, phosphorylation at Tyr-164 inhibits activity and promotes cell survival. Expressed in astrocytes.

The protein resides in the endoplasmic reticulum membrane. It carries out the reaction L-serine + hexadecanoyl-CoA + H(+) = 3-oxosphinganine + CO2 + CoA. The enzyme catalyses octadecanoyl-CoA + L-serine + H(+) = 3-oxoeicosasphinganine + CO2 + CoA. The catalysed reaction is tetradecanoyl-CoA + L-serine + H(+) = 3-oxohexadecasphinganine + CO2 + CoA. It catalyses the reaction dodecanoyl-CoA + L-serine + H(+) = 3-oxotetradecasphinganine + CO2 + CoA. It functions in the pathway lipid metabolism; sphingolipid metabolism. SPT complex catalytic activity is negatively regulated by ORMDL proteins, including ORMDL3, in the presence of ceramides. This mechanism allows to maintain ceramide levels at sufficient concentrations for the production of complex sphingolipids, but which prevents the accumulation of ceramides to levels that trigger apoptosis. Functionally, component of the serine palmitoyltransferase multisubunit enzyme (SPT) that catalyzes the initial and rate-limiting step in sphingolipid biosynthesis by condensing L-serine and activated acyl-CoA (most commonly palmitoyl-CoA) to form long-chain bases. The SPT complex is also composed of SPTLC2 or SPTLC3 and SPTSSA or SPTSSB. Within this complex, the heterodimer with SPTLC2 or SPTLC3 forms the catalytic core. The composition of the serine palmitoyltransferase (SPT) complex determines the substrate preference. The SPTLC1-SPTLC2-SPTSSA complex shows a strong preference for C16-CoA substrate, while the SPTLC1-SPTLC3-SPTSSA isozyme uses both C14-CoA and C16-CoA as substrates, with a slight preference for C14-CoA. The SPTLC1-SPTLC2-SPTSSB complex shows a strong preference for C18-CoA substrate, while the SPTLC1-SPTLC3-SPTSSB isozyme displays an ability to use a broader range of acyl-CoAs, without apparent preference. Required for adipocyte cell viability and metabolic homeostasis. The chain is Serine palmitoyltransferase 1 from Rattus norvegicus (Rat).